The following is a 213-amino-acid chain: Orotate phosphoribosyltransferase (213 aa).

Lysine 26 is a 5-phospho-alpha-D-ribose 1-diphosphate binding site. Residue 34–35 (FF) participates in orotate binding. 5-phospho-alpha-D-ribose 1-diphosphate is bound by residues 72–73 (YK), arginine 99, lysine 100, lysine 103, histidine 105, and 124–132 (DDVITAGTA). The orotate site is built by threonine 128 and arginine 156.

This sequence belongs to the purine/pyrimidine phosphoribosyltransferase family. PyrE subfamily. In terms of assembly, homodimer. Mg(2+) is required as a cofactor.

It catalyses the reaction orotidine 5'-phosphate + diphosphate = orotate + 5-phospho-alpha-D-ribose 1-diphosphate. It functions in the pathway pyrimidine metabolism; UMP biosynthesis via de novo pathway; UMP from orotate: step 1/2. In terms of biological role, catalyzes the transfer of a ribosyl phosphate group from 5-phosphoribose 1-diphosphate to orotate, leading to the formation of orotidine monophosphate (OMP). The polypeptide is Orotate phosphoribosyltransferase (Klebsiella pneumoniae subsp. pneumoniae (strain ATCC 700721 / MGH 78578)).